Consider the following 66-residue polypeptide: MDWLAKYWWILVLVFLVGVLLNVIKDLKRIDHKKFLANKPELPPHRDFNDKWDDEDDWPKKDQPKK.

Residues 4-24 (LAKYWWILVLVFLVGVLLNVI) traverse the membrane as a helical segment. The segment at 39–66 (KPELPPHRDFNDKWDDEDDWPKKDQPKK) is disordered. Residues 42–51 (LPPHRDFNDK) show a composition bias toward basic and acidic residues.

This sequence belongs to the UPF0370 family.

The protein resides in the cell membrane. The sequence is that of UPF0370 protein YpfN from Salmonella paratyphi C (strain RKS4594).